Here is a 428-residue protein sequence, read N- to C-terminus: Enolase (428 aa).

Gln-163 serves as a coordination point for (2R)-2-phosphoglycerate. The active-site Proton donor is Glu-205. Mg(2+) is bound by residues Asp-242, Glu-286, and Asp-313. Lys-338, Arg-367, Ser-368, and Lys-389 together coordinate (2R)-2-phosphoglycerate. Lys-338 acts as the Proton acceptor in catalysis.

Belongs to the enolase family. The cofactor is Mg(2+).

The protein resides in the cytoplasm. It is found in the secreted. The protein localises to the cell surface. The enzyme catalyses (2R)-2-phosphoglycerate = phosphoenolpyruvate + H2O. It participates in carbohydrate degradation; glycolysis; pyruvate from D-glyceraldehyde 3-phosphate: step 4/5. Its function is as follows. Catalyzes the reversible conversion of 2-phosphoglycerate (2-PG) into phosphoenolpyruvate (PEP). It is essential for the degradation of carbohydrates via glycolysis. The protein is Enolase of Bordetella petrii (strain ATCC BAA-461 / DSM 12804 / CCUG 43448).